The chain runs to 209 residues: Mitochondrial import inner membrane translocase subunit Tim23 (209 aa).

The next 3 helical transmembrane spans lie at 73–93 (FELA…FGAL), 125–145 (ALWA…GVII), and 181–197 (GLAG…YNNW).

Belongs to the Tim17/Tim22/Tim23 family. Component of the TIM23 complex at least composed of TIMM23, TIMM17 (TIMM17A or TIMM17B) and TIMM50; within this complex, directly interacts with TIMM50. The complex interacts with the TIMM44 component of the PAM complex and with DNAJC15. Upon mitochondrial depolarization, interacts with PINK1; the interaction is required for PINK1 accumulation at the outer mitochondrial membrane, kinase activation by autophosphorylation and PRKN recruitement to mitochondria.

Its subcellular location is the mitochondrion inner membrane. In terms of biological role, essential component of the TIM23 complex, a complex that mediates the translocation of transit peptide-containing proteins across the mitochondrial inner membrane. Has a role in the activation of stress-induced mitophagy by protecting PINK1 from OMA1-mediated degradation and facilitating its accumulation at the outer mitochondrial membrane in response to depolarization. This is Mitochondrial import inner membrane translocase subunit Tim23 (Timm23) from Rattus norvegicus (Rat).